The primary structure comprises 393 residues: Succinate--CoA ligase [ADP-forming] subunit beta (393 aa).

The ATP-grasp domain maps to 9–251; the sequence is KALFEKFGVL…LNEEDPKEIE (243 aa). Residues Lys-46, 53–55, Ser-109, and Glu-114 contribute to the ATP site; that span reads GRG. Residues Asn-206 and Asp-220 each coordinate Mg(2+). Substrate is bound by residues Asn-271 and 328-330; that span reads GIM.

It belongs to the succinate/malate CoA ligase beta subunit family. As to quaternary structure, heterotetramer of two alpha and two beta subunits. It depends on Mg(2+) as a cofactor.

It catalyses the reaction succinate + ATP + CoA = succinyl-CoA + ADP + phosphate. The enzyme catalyses GTP + succinate + CoA = succinyl-CoA + GDP + phosphate. It functions in the pathway carbohydrate metabolism; tricarboxylic acid cycle; succinate from succinyl-CoA (ligase route): step 1/1. Functionally, succinyl-CoA synthetase functions in the citric acid cycle (TCA), coupling the hydrolysis of succinyl-CoA to the synthesis of either ATP or GTP and thus represents the only step of substrate-level phosphorylation in the TCA. The beta subunit provides nucleotide specificity of the enzyme and binds the substrate succinate, while the binding sites for coenzyme A and phosphate are found in the alpha subunit. This Opitutus terrae (strain DSM 11246 / JCM 15787 / PB90-1) protein is Succinate--CoA ligase [ADP-forming] subunit beta.